The chain runs to 602 residues: Basic-leucine zipper transcription factor B (602 aa).

Positions 1-10 (MNQFYQSTTG) are enriched in polar residues. The disordered stretch occupies residues 1–128 (MNQFYQSTTG…NRVNQNLASR (128 aa)). Composition is skewed to low complexity over residues 11–54 (GQQN…TSTS) and 66–102 (QQQIQQQQIQQQQQQQQQQQQQIQQQSVDTPSSYNGD). A coiled-coil region spans residues 58 to 94 (KNKDNQSKQQQIQQQQIQQQQQQQQQQQQQIQQQSVD). In terms of domain architecture, bZIP spans 113–176 (ENKKNRNRVN…GVEIMKPDPA (64 aa)). The tract at residues 115–135 (KKNRNRVNQNLASRNYRQRKK) is basic motif. The tract at residues 138 to 145 (IKEIEEKL) is leucine-zipper. Disordered stretches follow at residues 328–401 (TNLS…QNNN) and 525–602 (QNQT…PSRQ). 3 stretches are compositionally biased toward low complexity: residues 336 to 350 (PNPTSPNSSSVTQST), 358 to 401 (LTLL…QNNN), and 525 to 592 (QNQT…SSPY). The stretch at 509 to 552 (TFSQQTQQLQQAQLQLQNQTKQQQQQLQNNNNNNNNNNNNNNSF) forms a coiled coil. The span at 593 to 602 (NHHQQQPSRQ) shows a compositional bias: polar residues.

Belongs to the bZIP family. In terms of assembly, binds DNA as a dimer. Heterodimerizes with dimA; in vitro. Also able to form homodimer; in vitro.

Its subcellular location is the nucleus. Its function is as follows. Transcriptional regulator involved in DIF-1 signaling. DIF-1 (Differentiation Inducing Factor-1) is a signal molecule involved in the differentiation of pstO (prestalk-O) cells. May be a direct activator of ecmA. The chain is Basic-leucine zipper transcription factor B (dimB) from Dictyostelium discoideum (Social amoeba).